We begin with the raw amino-acid sequence, 756 residues long: Pro-neuregulin-2, membrane-bound isoform (756 aa).

Residues Met1 to Ala19 constitute a propeptide that is removed on maturation. Residues Cys20 to Arg315 lie on the Extracellular side of the membrane. Asn55, Asn186, and Asn254 each carry an N-linked (GlcNAc...) asparagine glycan. The 96-residue stretch at Pro145–Ser240 folds into the Ig-like C2-type domain. 4 disulfide bridges follow: Cys165–Cys219, Cys253–Cys267, Cys261–Cys278, and Cys280–Cys289. Positions His249–Gln290 constitute an EGF-like domain. Asn296 is a glycosylation site (N-linked (GlcNAc...) asparagine). Residues Val316–Ala336 traverse the membrane as a helical segment. At Tyr337 to Leu756 the chain is on the cytoplasmic side. Disordered stretches follow at residues Thr402 to Leu439, Leu557 to Arg578, Ala608 to Leu694, and Leu711 to Leu756. Positions Ser404–Ser416 are enriched in low complexity. Residues His424–Glu437 show a composition bias toward basic and acidic residues. A compositionally biased stretch (low complexity) spans Leu654–Ala682.

Belongs to the neuregulin family. Interacts with ERBB3 and ERBB4. Post-translationally, proteolytic cleavage close to the plasma membrane on the external face leads to the release of the soluble growth factor form. In terms of processing, extensive glycosylation precedes the proteolytic cleavage. As to expression, highest expression in the brain, with lower levels in the lung. In the cerebellum, found in granule and Purkinje cells.

It is found in the cell membrane. The protein resides in the secreted. In terms of biological role, direct ligand for ERBB3 and ERBB4 tyrosine kinase receptors. Concomitantly recruits ERBB1 and ERBB2 coreceptors, resulting in ligand-stimulated tyrosine phosphorylation and activation of the ERBB receptors. May also promote the heterodimerization with the EGF receptor. In Mus musculus (Mouse), this protein is Pro-neuregulin-2, membrane-bound isoform (Nrg2).